Here is a 242-residue protein sequence, read N- to C-terminus: uncharacterized protein (242 aa).

In terms of domain architecture, HTH gntR-type spans 8–76 (TPLYIQLKQI…QGKGTFVKSP (69 aa)). A DNA-binding region (H-T-H motif) is located at residues 36–55 (ENELCTKYNVSRITVRKAIL).

This is an uncharacterized protein from Bacillus subtilis (strain 168).